Consider the following 325-residue polypeptide: Biotin synthase (325 aa).

The Radical SAM core domain maps to 51 to 280 (FMGRKADLCT…NVYIRYAGGR (230 aa)). 3 residues coordinate [4Fe-4S] cluster: cysteine 69, cysteine 73, and cysteine 76. Residues serine 113, cysteine 145, cysteine 205, and arginine 275 each coordinate [2Fe-2S] cluster.

It belongs to the radical SAM superfamily. Biotin synthase family. In terms of assembly, homodimer. It depends on [4Fe-4S] cluster as a cofactor. Requires [2Fe-2S] cluster as cofactor.

It carries out the reaction (4R,5S)-dethiobiotin + (sulfur carrier)-SH + 2 reduced [2Fe-2S]-[ferredoxin] + 2 S-adenosyl-L-methionine = (sulfur carrier)-H + biotin + 2 5'-deoxyadenosine + 2 L-methionine + 2 oxidized [2Fe-2S]-[ferredoxin]. Its pathway is cofactor biosynthesis; biotin biosynthesis; biotin from 7,8-diaminononanoate: step 2/2. Functionally, catalyzes the conversion of dethiobiotin (DTB) to biotin by the insertion of a sulfur atom into dethiobiotin via a radical-based mechanism. This is Biotin synthase from Clostridioides difficile (strain 630) (Peptoclostridium difficile).